We begin with the raw amino-acid sequence, 70 residues long: Small ribosomal subunit protein bS21 (70 aa).

This sequence belongs to the bacterial ribosomal protein bS21 family.

The polypeptide is Small ribosomal subunit protein bS21 (Helicobacter hepaticus (strain ATCC 51449 / 3B1)).